Consider the following 593-residue polypeptide: 2-succinyl-5-enolpyruvyl-6-hydroxy-3-cyclohexene-1-carboxylate synthase (593 aa).

Belongs to the TPP enzyme family. MenD subfamily. Homodimer. Mg(2+) is required as a cofactor. It depends on Mn(2+) as a cofactor. Thiamine diphosphate serves as cofactor.

The enzyme catalyses isochorismate + 2-oxoglutarate + H(+) = 5-enolpyruvoyl-6-hydroxy-2-succinyl-cyclohex-3-ene-1-carboxylate + CO2. The protein operates within quinol/quinone metabolism; 1,4-dihydroxy-2-naphthoate biosynthesis; 1,4-dihydroxy-2-naphthoate from chorismate: step 2/7. It functions in the pathway quinol/quinone metabolism; menaquinone biosynthesis. Catalyzes the thiamine diphosphate-dependent decarboxylation of 2-oxoglutarate and the subsequent addition of the resulting succinic semialdehyde-thiamine pyrophosphate anion to isochorismate to yield 2-succinyl-5-enolpyruvyl-6-hydroxy-3-cyclohexene-1-carboxylate (SEPHCHC). The protein is 2-succinyl-5-enolpyruvyl-6-hydroxy-3-cyclohexene-1-carboxylate synthase of Pelodictyon phaeoclathratiforme (strain DSM 5477 / BU-1).